Here is a 186-residue protein sequence, read N- to C-terminus: dTTP/UTP pyrophosphatase (186 aa).

The active-site Proton acceptor is the Asp-70.

It belongs to the Maf family. YhdE subfamily. A divalent metal cation is required as a cofactor.

The protein localises to the cytoplasm. It catalyses the reaction dTTP + H2O = dTMP + diphosphate + H(+). The catalysed reaction is UTP + H2O = UMP + diphosphate + H(+). Its function is as follows. Nucleoside triphosphate pyrophosphatase that hydrolyzes dTTP and UTP. May have a dual role in cell division arrest and in preventing the incorporation of modified nucleotides into cellular nucleic acids. This chain is dTTP/UTP pyrophosphatase, found in Vibrio vulnificus (strain CMCP6).